We begin with the raw amino-acid sequence, 215 residues long: Ribose-5-phosphate isomerase A (215 aa).

Substrate is bound by residues 26–29, 79–82, and 92–95; these read TGST, DGAD, and KGGG. Glutamate 101 functions as the Proton acceptor in the catalytic mechanism. Position 119 (lysine 119) interacts with substrate.

Belongs to the ribose 5-phosphate isomerase family. In terms of assembly, homodimer.

The enzyme catalyses aldehydo-D-ribose 5-phosphate = D-ribulose 5-phosphate. The protein operates within carbohydrate degradation; pentose phosphate pathway; D-ribose 5-phosphate from D-ribulose 5-phosphate (non-oxidative stage): step 1/1. In terms of biological role, catalyzes the reversible conversion of ribose-5-phosphate to ribulose 5-phosphate. This chain is Ribose-5-phosphate isomerase A, found in Xylella fastidiosa (strain M12).